The chain runs to 490 residues: Betaine aldehyde dehydrogenase (490 aa).

A K(+)-binding site is contributed by D93. 150 to 152 contacts NAD(+); sequence GAW. Catalysis depends on K162, which acts as the Charge relay system. Residue 176-179 coordinates NAD(+); sequence KPSE. V180 is a binding site for K(+). 230 to 233 is an NAD(+) binding site; the sequence is GIAS. L246 contributes to the K(+) binding site. The active-site Proton acceptor is E252. The NAD(+) site is built by G254, C286, and E387. C286 acts as the Nucleophile in catalysis. At C286 the chain carries Cysteine sulfenic acid (-SOH). The K(+) site is built by K457 and G460. The active-site Charge relay system is the E464.

It belongs to the aldehyde dehydrogenase family. As to quaternary structure, dimer of dimers. It depends on K(+) as a cofactor.

The enzyme catalyses betaine aldehyde + NAD(+) + H2O = glycine betaine + NADH + 2 H(+). It participates in amine and polyamine biosynthesis; betaine biosynthesis via choline pathway; betaine from betaine aldehyde: step 1/1. Functionally, involved in the biosynthesis of the osmoprotectant glycine betaine. Catalyzes the irreversible oxidation of betaine aldehyde to the corresponding acid. The chain is Betaine aldehyde dehydrogenase from Yersinia pestis.